The chain runs to 101 residues: Large ribosomal subunit protein bL28 (101 aa).

It belongs to the bacterial ribosomal protein bL28 family.

This Rhodopseudomonas palustris (strain BisB18) protein is Large ribosomal subunit protein bL28.